Reading from the N-terminus, the 59-residue chain is Large ribosomal subunit protein bL32 (59 aa).

Positions 1–16 (MAVPKRKTSPSKRGMR) are enriched in basic residues. Residues 1 to 59 (MAVPKRKTSPSKRGMRRSADALKAPTYVEDKNSGELRRPHHIDLKSGMYRGRQVLEAKE) form a disordered region. The segment covering 28–44 (VEDKNSGELRRPHHIDL) has biased composition (basic and acidic residues).

It belongs to the bacterial ribosomal protein bL32 family.

In Brucella anthropi (strain ATCC 49188 / DSM 6882 / CCUG 24695 / JCM 21032 / LMG 3331 / NBRC 15819 / NCTC 12168 / Alc 37) (Ochrobactrum anthropi), this protein is Large ribosomal subunit protein bL32.